The chain runs to 149 residues: MAAKVEPFWMRKTLDQLDTQEWESLCDGCGLCCLQKLEDEEDNAVYYTRIACKLLDLKTCQCSDYANRRASVPDCIQLTPGQADEFKWLPPTCGYRLVSEGKDLPLWHHLVCGDRTAVHHERISQSGRMLSENNVAEDDWEDYLIFRAG.

Belongs to the UPF0260 family.

This is UPF0260 protein Psyr_1567 from Pseudomonas syringae pv. syringae (strain B728a).